Consider the following 68-residue polypeptide: DNA-directed RNA polymerase subunit omega (68 aa).

The protein belongs to the RNA polymerase subunit omega family. The RNAP catalytic core consists of 2 alpha, 1 beta, 1 beta' and 1 omega subunit. When a sigma factor is associated with the core the holoenzyme is formed, which can initiate transcription.

It catalyses the reaction RNA(n) + a ribonucleoside 5'-triphosphate = RNA(n+1) + diphosphate. Functionally, promotes RNA polymerase assembly. Latches the N- and C-terminal regions of the beta' subunit thereby facilitating its interaction with the beta and alpha subunits. This chain is DNA-directed RNA polymerase subunit omega, found in Desulforapulum autotrophicum (strain ATCC 43914 / DSM 3382 / VKM B-1955 / HRM2) (Desulfobacterium autotrophicum).